We begin with the raw amino-acid sequence, 31 residues long: Photosystem II reaction center protein T (31 aa).

The helical transmembrane segment at 3 to 23 (ALVYTFLLVGTLGIIFFAIFF) threads the bilayer.

The protein belongs to the PsbT family. PSII is composed of 1 copy each of membrane proteins PsbA, PsbB, PsbC, PsbD, PsbE, PsbF, PsbH, PsbI, PsbJ, PsbK, PsbL, PsbM, PsbT, PsbY, PsbZ, Psb30/Ycf12, at least 3 peripheral proteins of the oxygen-evolving complex and a large number of cofactors. It forms dimeric complexes.

It localises to the plastid. The protein localises to the chloroplast thylakoid membrane. Its function is as follows. Found at the monomer-monomer interface of the photosystem II (PS II) dimer, plays a role in assembly and dimerization of PSII. PSII is a light-driven water plastoquinone oxidoreductase, using light energy to abstract electrons from H(2)O, generating a proton gradient subsequently used for ATP formation. The protein is Photosystem II reaction center protein T of Mesostigma viride (Green alga).